Consider the following 246-residue polypeptide: Small ribosomal subunit protein uS2 (246 aa).

The tract at residues 226-246 (QGEEEAEVAEETAPETETTTA) is disordered. Positions 229 to 239 (EEAEVAEETAP) are enriched in acidic residues.

Belongs to the universal ribosomal protein uS2 family. In terms of assembly, part of the 30S ribosomal subunit. Interacts with BrxC.

The sequence is that of Small ribosomal subunit protein uS2 (rpsB) from Bacillus subtilis (strain 168).